The primary structure comprises 338 residues: Formamidase (338 aa).

A CN hydrolase domain is found at 14 to 260 (LLIAAIQYPV…WEIVTAELFP (247 aa)). Glutamate 60 acts as the Proton acceptor in catalysis. The active-site Proton donor is lysine 133. Cysteine 166 (nucleophile) is an active-site residue.

Belongs to the carbon-nitrogen hydrolase superfamily. Aliphatic amidase family.

It catalyses the reaction formamide + H2O = formate + NH4(+). Its function is as follows. Is an aliphatic amidase with a restricted substrate specificity, as it only hydrolyzes formamide. In Photorhabdus laumondii subsp. laumondii (strain DSM 15139 / CIP 105565 / TT01) (Photorhabdus luminescens subsp. laumondii), this protein is Formamidase.